Reading from the N-terminus, the 399-residue chain is Formate-dependent phosphoribosylglycinamide formyltransferase (399 aa).

N(1)-(5-phospho-beta-D-ribosyl)glycinamide-binding positions include 8 to 9 (EL) and Glu68. ATP-binding positions include Arg100, Lys141, 146-151 (SSGHGQ), 185-188 (EALA), and Glu193. The ATP-grasp domain maps to 105-308 (VLAHEELGLP…EFALHARAIL (204 aa)). 2 residues coordinate Mg(2+): Glu266 and Glu279. N(1)-(5-phospho-beta-D-ribosyl)glycinamide-binding positions include Asp286, Lys361, and 368–369 (RR).

This sequence belongs to the PurK/PurT family. Homodimer.

The catalysed reaction is N(1)-(5-phospho-beta-D-ribosyl)glycinamide + formate + ATP = N(2)-formyl-N(1)-(5-phospho-beta-D-ribosyl)glycinamide + ADP + phosphate + H(+). Its pathway is purine metabolism; IMP biosynthesis via de novo pathway; N(2)-formyl-N(1)-(5-phospho-D-ribosyl)glycinamide from N(1)-(5-phospho-D-ribosyl)glycinamide (formate route): step 1/1. Involved in the de novo purine biosynthesis. Catalyzes the transfer of formate to 5-phospho-ribosyl-glycinamide (GAR), producing 5-phospho-ribosyl-N-formylglycinamide (FGAR). Formate is provided by PurU via hydrolysis of 10-formyl-tetrahydrofolate. The sequence is that of Formate-dependent phosphoribosylglycinamide formyltransferase from Bifidobacterium adolescentis (strain ATCC 15703 / DSM 20083 / NCTC 11814 / E194a).